A 453-amino-acid chain; its full sequence is F-box/FBD/LRR-repeat protein At4g00160 (453 aa).

Residues 15-68 (KDRISELPDALLIKILSFLPTKIVVATSVFSKQWRPLWKLVPNLEFDSEDYDDK) form the F-box domain. LRR repeat units lie at residues 89-111 (LESF…LWVG), 165-190 (MKSL…LLSG), 215-239 (VPSL…VINA), 247-270 (IEDL…IFDG), 282-307 (LTSV…IFYQ), and 331-358 (SPKL…KWNE). The FBD domain occupies 355–406 (KWNEPKYVPECLLSHLETFVWRRFDWGREEEKEIATYILKNARRLNKATFST).

This is F-box/FBD/LRR-repeat protein At4g00160 from Arabidopsis thaliana (Mouse-ear cress).